Reading from the N-terminus, the 228-residue chain is Geranylgeranylglyceryl phosphate synthase (228 aa).

A sn-glycerol 1-phosphate-binding site is contributed by Lys-13. Residues Asp-15 and Thr-41 each coordinate Mg(2+). Residues 159-164, Gly-189, and 209-210 each bind sn-glycerol 1-phosphate; these read YIEYSG and GN.

Belongs to the GGGP/HepGP synthase family. Group I subfamily. Mg(2+) serves as cofactor.

The protein localises to the cytoplasm. It catalyses the reaction sn-glycerol 1-phosphate + (2E,6E,10E)-geranylgeranyl diphosphate = sn-3-O-(geranylgeranyl)glycerol 1-phosphate + diphosphate. Its pathway is membrane lipid metabolism; glycerophospholipid metabolism. Its function is as follows. Prenyltransferase that catalyzes the transfer of the geranylgeranyl moiety of geranylgeranyl diphosphate (GGPP) to the C3 hydroxyl of sn-glycerol-1-phosphate (G1P). This reaction is the first ether-bond-formation step in the biosynthesis of archaeal membrane lipids. The sequence is that of Geranylgeranylglyceryl phosphate synthase from Methanospirillum hungatei JF-1 (strain ATCC 27890 / DSM 864 / NBRC 100397 / JF-1).